A 206-amino-acid polypeptide reads, in one-letter code: Thiamine-phosphate synthase (206 aa).

4-amino-2-methyl-5-(diphosphooxymethyl)pyrimidine contacts are provided by residues 37–41 and N69; that span reads QYRNK. Residues D70 and D89 each contribute to the Mg(2+) site. S108 lines the 4-amino-2-methyl-5-(diphosphooxymethyl)pyrimidine pocket. 135–137 contributes to the 2-[(2R,5Z)-2-carboxy-4-methylthiazol-5(2H)-ylidene]ethyl phosphate binding site; sequence SST. K138 is a binding site for 4-amino-2-methyl-5-(diphosphooxymethyl)pyrimidine. 2-[(2R,5Z)-2-carboxy-4-methylthiazol-5(2H)-ylidene]ethyl phosphate-binding positions include G165 and 185–186; that span reads IS.

Belongs to the thiamine-phosphate synthase family. The cofactor is Mg(2+).

It catalyses the reaction 2-[(2R,5Z)-2-carboxy-4-methylthiazol-5(2H)-ylidene]ethyl phosphate + 4-amino-2-methyl-5-(diphosphooxymethyl)pyrimidine + 2 H(+) = thiamine phosphate + CO2 + diphosphate. The enzyme catalyses 2-(2-carboxy-4-methylthiazol-5-yl)ethyl phosphate + 4-amino-2-methyl-5-(diphosphooxymethyl)pyrimidine + 2 H(+) = thiamine phosphate + CO2 + diphosphate. The catalysed reaction is 4-methyl-5-(2-phosphooxyethyl)-thiazole + 4-amino-2-methyl-5-(diphosphooxymethyl)pyrimidine + H(+) = thiamine phosphate + diphosphate. It participates in cofactor biosynthesis; thiamine diphosphate biosynthesis; thiamine phosphate from 4-amino-2-methyl-5-diphosphomethylpyrimidine and 4-methyl-5-(2-phosphoethyl)-thiazole: step 1/1. In terms of biological role, condenses 4-methyl-5-(beta-hydroxyethyl)thiazole monophosphate (THZ-P) and 2-methyl-4-amino-5-hydroxymethyl pyrimidine pyrophosphate (HMP-PP) to form thiamine monophosphate (TMP). The protein is Thiamine-phosphate synthase of Azoarcus sp. (strain BH72).